Reading from the N-terminus, the 263-residue chain is MEKNNKKRFVLVHGLCHGAWCWYKVKTHLEAVGHCVTAVDLAASGINMTRLEEIQTLKDYCKPLLELLNSLGSDDDKVILVAHSMGGIPAALASDIFPSKIATIVFLTAFMPDTRNLPAYVYQKLIRSVPQEGWLDTVFGTYGKHECPLEFALFGPKFMAKNLYQLSPVQDLELAKMLVRVNPIITNNLAGTRSFSEEGYGTVTRIYIVCGEDMAVPEDYQWWMIKNFPPKEVMEIKCADHMAMFSKPHKLCALLVEIACKYA.

Ser84 functions as the Acyl-ester intermediate in the catalytic mechanism. Residues Asp213 and His241 each act as charge relay system in the active site.

It belongs to the AB hydrolase superfamily. Methylesterase family.

The enzyme catalyses methyl salicylate + H2O = salicylate + methanol + H(+). It functions in the pathway plant hormone biosynthesis. Esterase activity is down-regulated by salicylic acid (SA). In terms of biological role, methylesterase shown to have carboxylesterase activity and methyl salicylate (MeSA) esterase activity in vitro. This Arabidopsis thaliana (Mouse-ear cress) protein is Methylesterase 4.